A 390-amino-acid polypeptide reads, in one-letter code: MPAGRRYGRTRRATLYVTKEGGGRPVAKRVLMAMSGGVDSSVAAALLVEQGYEVIGVTMNTWTDDIPEEIQMNQHSGCCSLAAVEDARSVAHKLGIPYYVMNFQGQFARTVIDYFIEEYTRGRTPNPCIACNRYVKFSAFLEKAKQLECDYVATGHYAVIGQDDRFPGRWLLGKSADARKDQTYVLHNLTQEALAHTLFPVGHLQKSEVRALAAKYGFVTADKPDSQEICFVYDNDYGRFLKERAPEAIVPGPILNTRGEVIGQHQGLPLYTIGQRKGLGLTTPRPVYVVDLDVERNAVIVGEDEETYRGGLVASDLNWIAIPGLTFPRRCRAKIRRMAPEAECTIYPIGEDAVRVEFDRPQRAITPGQAVVFYDGDWVLGGGTIERAIN.

Residues 33–40 and M59 contribute to the ATP site; that span reads AMSGGVDS. C131 (nucleophile) is an active-site residue. The cysteines at positions 131 and 230 are disulfide-linked. An ATP-binding site is contributed by G155. The interaction with tRNA stretch occupies residues 180 to 182; that stretch reads KDQ. C230 acts as the Cysteine persulfide intermediate in catalysis.

Belongs to the MnmA/TRMU family.

Its subcellular location is the cytoplasm. It carries out the reaction S-sulfanyl-L-cysteinyl-[protein] + uridine(34) in tRNA + AH2 + ATP = 2-thiouridine(34) in tRNA + L-cysteinyl-[protein] + A + AMP + diphosphate + H(+). Functionally, catalyzes the 2-thiolation of uridine at the wobble position (U34) of tRNA, leading to the formation of s(2)U34. The chain is tRNA-specific 2-thiouridylase MnmA from Symbiobacterium thermophilum (strain DSM 24528 / JCM 14929 / IAM 14863 / T).